The chain runs to 85 residues: Large ribosomal subunit protein bL27 (85 aa).

The disordered stretch occupies residues 1–26 (MAHKKGVGSSRNGRDSNPKMLGVKRF).

Belongs to the bacterial ribosomal protein bL27 family.

In Roseiflexus sp. (strain RS-1), this protein is Large ribosomal subunit protein bL27.